We begin with the raw amino-acid sequence, 201 residues long: Testis-expressed protein 38 (201 aa).

A helical membrane pass occupies residues 3–23 (ISLCIGFLGLCSVLIGSCILF).

It is found in the membrane. The sequence is that of Testis-expressed protein 38 (Tex38) from Mus musculus (Mouse).